A 354-amino-acid chain; its full sequence is Uroporphyrinogen decarboxylase (354 aa).

Substrate-binding positions include 27–31 (RQAGR), D77, Y154, S209, and H327.

Belongs to the uroporphyrinogen decarboxylase family. In terms of assembly, homodimer.

The protein localises to the cytoplasm. It carries out the reaction uroporphyrinogen III + 4 H(+) = coproporphyrinogen III + 4 CO2. The protein operates within porphyrin-containing compound metabolism; protoporphyrin-IX biosynthesis; coproporphyrinogen-III from 5-aminolevulinate: step 4/4. Its function is as follows. Catalyzes the decarboxylation of four acetate groups of uroporphyrinogen-III to yield coproporphyrinogen-III. This chain is Uroporphyrinogen decarboxylase, found in Methylobacillus flagellatus (strain ATCC 51484 / DSM 6875 / VKM B-1610 / KT).